Consider the following 293-residue polypeptide: 4-hydroxybenzoate octaprenyltransferase (293 aa).

Helical transmembrane passes span 19–39 (PIGILLLLWPTLWAQWLASNG), 43–63 (WLILWIFVMGVVLMRSAGCVV), 95–115 (LLAAGLSLLAFLLILPLNALV), 135–155 (FFAIPQAYLGVAFGFGIPMSY), 158–178 (LWGEVPAEAWLLLAANVFWAI), 209–229 (LTAIAFCYAATLALLAWVGAL), 231–251 (DFSGWYYAGLAAAGAIAVYHL), and 266–286 (FLHNTWFGAAVFGGIVLHFLL).

It belongs to the UbiA prenyltransferase family. It depends on Mg(2+) as a cofactor.

Its subcellular location is the cell inner membrane. It catalyses the reaction all-trans-octaprenyl diphosphate + 4-hydroxybenzoate = 4-hydroxy-3-(all-trans-octaprenyl)benzoate + diphosphate. It participates in cofactor biosynthesis; ubiquinone biosynthesis. Catalyzes the prenylation of para-hydroxybenzoate (PHB) with an all-trans polyprenyl group. Mediates the second step in the final reaction sequence of ubiquinone-8 (UQ-8) biosynthesis, which is the condensation of the polyisoprenoid side chain with PHB, generating the first membrane-bound Q intermediate 3-octaprenyl-4-hydroxybenzoate. In Thiobacillus denitrificans (strain ATCC 25259 / T1), this protein is 4-hydroxybenzoate octaprenyltransferase.